The sequence spans 295 residues: ATP synthase gamma chain (295 aa).

This sequence belongs to the ATPase gamma chain family. F-type ATPases have 2 components, CF(1) - the catalytic core - and CF(0) - the membrane proton channel. CF(1) has five subunits: alpha(3), beta(3), gamma(1), delta(1), epsilon(1). CF(0) has three main subunits: a, b and c.

It is found in the cell inner membrane. In terms of biological role, produces ATP from ADP in the presence of a proton gradient across the membrane. The gamma chain is believed to be important in regulating ATPase activity and the flow of protons through the CF(0) complex. In Campylobacter curvus (strain 525.92), this protein is ATP synthase gamma chain.